The chain runs to 142 residues: Large ribosomal subunit protein uL11 (142 aa).

The tract at residues 86–105 (LKSGSKEPGKQSAGQISRAK) is disordered.

Belongs to the universal ribosomal protein uL11 family. As to quaternary structure, part of the ribosomal stalk of the 50S ribosomal subunit. Interacts with L10 and the large rRNA to form the base of the stalk. L10 forms an elongated spine to which L12 dimers bind in a sequential fashion forming a multimeric L10(L12)X complex. One or more lysine residues are methylated.

In terms of biological role, forms part of the ribosomal stalk which helps the ribosome interact with GTP-bound translation factors. The protein is Large ribosomal subunit protein uL11 of Chelativorans sp. (strain BNC1).